Reading from the N-terminus, the 199-residue chain is MENFRKVRSEEAPAGDGDEGGSPNSGPFADLAPGAVHMRVKEGSKIRNLLAFATASMAQPATRAIVFSGCGRATTKTVTCAEILKRRLAGLHQVTRLRYRSVREVWQSLPPGPTPGQTPSDPAASLSVLKNVPSLAILLSKDALDPRQLGYQPPNLSPGPSSPPTVSTSKRSLGESAAEEGTAKRSQPEPEAENEDRTA.

A compositionally biased stretch (basic and acidic residues) spans 1 to 11; the sequence is MENFRKVRSEE. 2 disordered regions span residues 1 to 31 and 146 to 199; these read MENFRKVRSEEAPAGDGDEGGSPNSGPFADL and PRQL…DRTA. S172 carries the phosphoserine modification. A compositionally biased stretch (acidic residues) spans 190–199; sequence PEAENEDRTA.

It belongs to the histone-like Alba family. In terms of assembly, component of nuclear RNase P and RNase MRP ribonucleoproteins. RNase P consists of a catalytic RNA moiety and 10 different protein chains; POP1, POP4, POP5, POP7, RPP14, RPP21, RPP25, RPP30, RPP38 and RPP40. Within the RNase P complex, POP1, POP7 and RPP25 form the 'finger' subcomplex, POP5, RPP14, RPP40 and homodimeric RPP30 form the 'palm' subcomplex, and RPP21, POP4 and RPP38 form the 'wrist' subcomplex. All subunits of the RNase P complex interact with the catalytic RNA. Several subunits of RNase P are also part of the RNase MRP complex. RNase MRP consists of a catalytic RNA moiety and about 8 protein subunits; POP1, POP7, RPP25, RPP30, RPP38, RPP40 and possibly also POP4 and POP5. POP7 forms a heterodimer with RPP25 that binds to the P3 stem loop of the catalytic RNA.

The protein localises to the nucleus. The protein resides in the nucleolus. Component of ribonuclease P, a ribonucleoprotein complex that generates mature tRNA molecules by cleaving their 5'-ends. Also a component of the MRP ribonuclease complex, which cleaves pre-rRNA sequences. The polypeptide is Ribonuclease P protein subunit p25 (Rpp25) (Mus musculus (Mouse)).